Here is a 211-residue protein sequence, read N- to C-terminus: Small ribosomal subunit protein uS5 (211 aa).

The disordered stretch occupies residues 1–41 (MPGRERRDGGRSADDNKQNDRNERRGGGRRDDRRNQQQDER). An S5 DRBM domain is found at 44-107 (YIERVVTINR…EEARKNFFRV (64 aa)).

This sequence belongs to the universal ribosomal protein uS5 family. In terms of assembly, part of the 30S ribosomal subunit. Contacts proteins S4 and S8.

Its function is as follows. With S4 and S12 plays an important role in translational accuracy. In terms of biological role, located at the back of the 30S subunit body where it stabilizes the conformation of the head with respect to the body. The chain is Small ribosomal subunit protein uS5 from Corynebacterium glutamicum (strain R).